A 75-amino-acid polypeptide reads, in one-letter code: Metallothionein-like protein 1 (75 aa).

This sequence belongs to the metallothionein superfamily. Type 15 family.

In terms of biological role, metallothioneins have a high content of cysteine residues that bind various heavy metals. The sequence is that of Metallothionein-like protein 1 (MTA) from Pisum sativum (Garden pea).